A 307-amino-acid chain; its full sequence is Farnesol kinase, chloroplastic (307 aa).

Residues 1-65 (MATTSTTTKL…TKIRKSSLAA (65 aa)) constitute a chloroplast transit peptide. 7 consecutive transmembrane segments (helical) span residues 77-97 (VCAF…WGEI), 116-136 (IGLV…GALF), 137-157 (ASLV…GVYH), 177-194 (GPLY…YYWK), 197-217 (PIAI…DIVG), 237-257 (IGMA…FASF), and 265-285 (GMIL…SLPI).

This sequence belongs to the polyprenol kinase family.

It is found in the plastid. The protein resides in the chloroplast membrane. It catalyses the reaction (2E,6E)-farnesol + CTP = (2E,6E)-farnesyl phosphate + CDP + H(+). It carries out the reaction (2E,6E)-farnesol + ATP = (2E,6E)-farnesyl phosphate + ADP + H(+). The catalysed reaction is (2E)-geraniol + ATP = (2E)-geranyl phosphate + ADP + H(+). The enzyme catalyses (2E,6E,10E)-geranylgeraniol + ATP = (2E,6E,10E)-geranylgeranyl phosphate + ADP + H(+). In terms of biological role, kinase involved in negative regulation of abscisic acid (ABA) signaling. Substrate preference is farnesol &gt; geraniol &gt; geranylgeraniol, but has no activity with farnesyl phosphate. Can use CTP &gt; ATP &gt; GTP = UTP as phosphoryl donor. This chain is Farnesol kinase, chloroplastic, found in Arabidopsis thaliana (Mouse-ear cress).